A 485-amino-acid chain; its full sequence is Glutamyl-tRNA(Gln) amidotransferase subunit A (485 aa).

Catalysis depends on charge relay system residues Lys-78 and Ser-153. Residue Ser-177 is the Acyl-ester intermediate of the active site.

This sequence belongs to the amidase family. GatA subfamily. As to quaternary structure, heterotrimer of A, B and C subunits.

It catalyses the reaction L-glutamyl-tRNA(Gln) + L-glutamine + ATP + H2O = L-glutaminyl-tRNA(Gln) + L-glutamate + ADP + phosphate + H(+). Its function is as follows. Allows the formation of correctly charged Gln-tRNA(Gln) through the transamidation of misacylated Glu-tRNA(Gln) in organisms which lack glutaminyl-tRNA synthetase. The reaction takes place in the presence of glutamine and ATP through an activated gamma-phospho-Glu-tRNA(Gln). This Bacillus cytotoxicus (strain DSM 22905 / CIP 110041 / 391-98 / NVH 391-98) protein is Glutamyl-tRNA(Gln) amidotransferase subunit A.